A 248-amino-acid polypeptide reads, in one-letter code: uncharacterized protein (248 aa).

This is an uncharacterized protein from Escherichia coli (Bacteriophage T4).